The primary structure comprises 139 residues: Small ribosomal subunit protein bS16 (139 aa).

The interval K84–A139 is disordered.

It belongs to the bacterial ribosomal protein bS16 family.

This Streptomyces coelicolor (strain ATCC BAA-471 / A3(2) / M145) protein is Small ribosomal subunit protein bS16.